Reading from the N-terminus, the 468-residue chain is Zinc transporter SLC39A7 (468 aa).

A helical membrane pass occupies residues 10 to 30 (WVAVGLLTWAALGLLVAGHEG). Basic and acidic residues-rich tracts occupy residues 36–56 (RDVEEDFHGHSHGHSHEDFHH) and 64–100 (HTHESIWHGHAHSHDHGHSREDVHHGHSHGHSHDSLH). The disordered stretch occupies residues 36–116 (RDVEEDFHGH…SHGASREAGA (81 aa)). His64 is modified (pros-methylhistidine). A run of 3 helical transmembrane segments spans residues 132-152 (ALGATVLISAAPFFVLFLIPV), 163-183 (LQILLSFASGGLLGDAFLHLI), and 208-228 (GPILSVGLWVLSGIVAFLVVE). Residues 237-248 (GHGHAHAHGHGH) show a composition bias toward basic residues. The tract at residues 237 to 313 (GHGHAHAHGH…NPEEEKTGSD (77 aa)) is disordered. Over residues 249 to 312 (SHGDSHAHGH…QNPEEEKTGS (64 aa)) the composition is skewed to basic and acidic residues. 3 consecutive transmembrane segments (helical) span residues 385–405 (LTAIGALAGTACALLTEGGAV), 409–429 (VAGGAGPGWVLPFTAGGFIYV), and 447–467 (SLLEVLGLLGGVAMMVLIAHL).

It belongs to the ZIP transporter (TC 2.A.5) family. KE4/Catsup subfamily. As to quaternary structure, homodimer. Rapidly phosphorylated by CK2 following Zn(2+) treatment. This phosphorylation is required for efficient cytosolic Zn(2+) release.

Its subcellular location is the endoplasmic reticulum membrane. The protein localises to the golgi apparatus. It is found in the cis-Golgi network membrane. It catalyses the reaction Zn(2+)(in) = Zn(2+)(out). In terms of biological role, transports Zn(2+) from the endoplasmic reticulum (ER)/Golgi apparatus to the cytosol, playing an essential role in the regulation of cytosolic zinc levels. Acts as a gatekeeper of zinc release from intracellular stores, requiring post-translational activation by phosphorylation on residues, resulting in activation of multiple downstream pathways leading to cell growth and proliferation. Has an essential role in B cell development and is required for proper B cell receptor signaling. Plays an important role in maintaining intestinal epithelial homeostasis and skin dermis development by regulating ER function. Controls cell signaling pathways involved in glucose metabolism in skeletal muscle. Has a protective role against ER stress in different biological contexts. Mediates Zn(2+)-induced ferroptosis. The polypeptide is Zinc transporter SLC39A7 (Rattus norvegicus (Rat)).